A 255-amino-acid chain; its full sequence is GTP cyclohydrolase FolE2 (255 aa).

It belongs to the GTP cyclohydrolase IV family.

It catalyses the reaction GTP + H2O = 7,8-dihydroneopterin 3'-triphosphate + formate + H(+). The protein operates within cofactor biosynthesis; 7,8-dihydroneopterin triphosphate biosynthesis; 7,8-dihydroneopterin triphosphate from GTP: step 1/1. Converts GTP to 7,8-dihydroneopterin triphosphate. The chain is GTP cyclohydrolase FolE2 from Syntrophus aciditrophicus (strain SB).